Reading from the N-terminus, the 71-residue chain is Prophage lysis protein S homolog EssQ (71 aa).

Belongs to the lambda phage S protein family.

The sequence is that of Prophage lysis protein S homolog EssQ (essQ) from Escherichia coli (strain K12).